We begin with the raw amino-acid sequence, 196 residues long: RNA polymerase II subunit B1 CTD phosphatase RTR2 (196 aa).

The RTR1-type zinc-finger motif lies at 52-123 (YLARLLSPMS…LSQTPLHERR (72 aa)). Zn(2+) is bound by residues Cys-75, Cys-80, Cys-99, and His-103.

Belongs to the RPAP2 family.

It localises to the cytoplasm. Its subcellular location is the nucleus. It carries out the reaction O-phospho-L-seryl-[protein] + H2O = L-seryl-[protein] + phosphate. The catalysed reaction is O-phospho-L-threonyl-[protein] + H2O = L-threonyl-[protein] + phosphate. In terms of biological role, probable RNA polymerase II subunit B1 C-terminal domain (CTD) phosphatase that regulates RNA polymerase II transcription. May have functional redundancy with RTR1. The polypeptide is RNA polymerase II subunit B1 CTD phosphatase RTR2 (RTR2) (Saccharomyces cerevisiae (strain ATCC 204508 / S288c) (Baker's yeast)).